Reading from the N-terminus, the 339-residue chain is UDP-N-acetylenolpyruvoylglucosamine reductase (339 aa).

The FAD-binding PCMH-type domain maps to 19-189 (VDVQARLFAE…LRVRFKLSRV (171 aa)). Arg166 is an active-site residue. Ser239 (proton donor) is an active-site residue. Glu335 is a catalytic residue.

This sequence belongs to the MurB family. FAD serves as cofactor.

The protein resides in the cytoplasm. It carries out the reaction UDP-N-acetyl-alpha-D-muramate + NADP(+) = UDP-N-acetyl-3-O-(1-carboxyvinyl)-alpha-D-glucosamine + NADPH + H(+). The protein operates within cell wall biogenesis; peptidoglycan biosynthesis. In terms of biological role, cell wall formation. This chain is UDP-N-acetylenolpyruvoylglucosamine reductase, found in Pseudomonas syringae pv. syringae (strain B728a).